The following is a 160-amino-acid chain: MTDTPPFWQVRSLDEMTTEEWESLCDGCGRCCLHKLREDVTDQVLYTDVACRLLDLESCRCSDYAQRRRKVPDCVQLTPAALADIDWLPPSCAYRLLAEGQTLAWWHPLVSGSPDTVHEAGISVRGRAVSERRAGPLEHHIADWPGTMPRPRRPRIRRPA.

The protein belongs to the UPF0260 family.

The protein is UPF0260 protein GDI1595/Gdia_1801 of Gluconacetobacter diazotrophicus (strain ATCC 49037 / DSM 5601 / CCUG 37298 / CIP 103539 / LMG 7603 / PAl5).